A 512-amino-acid chain; its full sequence is Protein arginine N-methyltransferase 2 (512 aa).

The tract at residues 67-103 is disordered; the sequence is TSNIDDLPLPPPIQEVEEEEPTQQNIEQQQQTQDESD. Residues 88-99 show a composition bias toward low complexity; sequence TQQNIEQQQQTQ. The SAM-dependent MTase PRMT-type domain maps to 120-508; that stretch reads DEEYFSSYSK…KTNPFDYSYQ (389 aa). Residues histidine 133, arginine 142, glycine 166, and glutamate 217 each coordinate S-adenosyl-L-methionine. Active-site residues include glutamate 231 and glutamate 240. The tract at residues 375–395 is disordered; sequence DDDDNDNNNNNNDNSNDDENK.

Belongs to the class I-like SAM-binding methyltransferase superfamily. Protein arginine N-methyltransferase family.

It is found in the cytoplasm. It localises to the nucleus. The enzyme catalyses L-arginyl-[protein] + 2 S-adenosyl-L-methionine = N(omega),N(omega)-dimethyl-L-arginyl-[protein] + 2 S-adenosyl-L-homocysteine + 2 H(+). Its function is as follows. Arginine methyltransferase that methylates the guanidino nitrogens of arginyl residues in some proteins such as histones. The protein is Protein arginine N-methyltransferase 2 (prmt2) of Dictyostelium discoideum (Social amoeba).